The following is a 1241-amino-acid chain: ATP-dependent helicase/nuclease subunit A (1241 aa).

The 474-residue stretch at Ser12–Arg485 folds into the UvrD-like helicase ATP-binding domain. Ala33 to Thr40 is a binding site for ATP. One can recognise a UvrD-like helicase C-terminal domain in the interval Gly505 to Gly805.

It belongs to the helicase family. AddA subfamily. In terms of assembly, heterodimer of AddA and AddB/RexB. Requires Mg(2+) as cofactor.

The catalysed reaction is Couples ATP hydrolysis with the unwinding of duplex DNA by translocating in the 3'-5' direction.. It carries out the reaction ATP + H2O = ADP + phosphate + H(+). Functionally, the heterodimer acts as both an ATP-dependent DNA helicase and an ATP-dependent, dual-direction single-stranded exonuclease. Recognizes the chi site generating a DNA molecule suitable for the initiation of homologous recombination. The AddA nuclease domain is required for chi fragment generation; this subunit has the helicase and 3' -&gt; 5' nuclease activities. In Bacillus cereus (strain AH187), this protein is ATP-dependent helicase/nuclease subunit A.